The primary structure comprises 392 residues: Ameloblastin (392 aa).

Residues 1–26 form the signal peptide; the sequence is MPALKIPLFKMKDMILILCLLKMSSA. Proline 37 carries the post-translational modification Hydroxyproline. Serine 43 is subject to Phosphoserine. 3 disordered regions span residues 86-109, 247-280, and 349-392; these read FPWM…PGQK, TLEF…LADP, and TTLG…FQEP. The segment covering 97–109 has biased composition (low complexity); sequence QQPSLQPQQPGQK. Positions 359 to 381 are enriched in polar residues; sequence VDSTATPDTQHTLMPRNKAQQPQ. Over residues 382 to 392 the composition is skewed to basic and acidic residues; that stretch reads IKHDAWHFQEP.

The protein belongs to the ameloblastin family.

It is found in the secreted. It localises to the extracellular space. The protein resides in the extracellular matrix. Its function is as follows. Involved in the mineralization and structural organization of enamel. This is Ameloblastin (AMBN) from Bos taurus (Bovine).